The primary structure comprises 261 residues: Sepiapterin reductase (261 aa).

At methionine 1 the chain carries N-acetylmethionine. 14–20 is a binding site for NADP(+); sequence GASRGFG. Serine 32 carries the post-translational modification Phosphoserine. Residues 42–43 and 69–70 each bind NADP(+); these read RN and DL. A Phosphoserine modification is found at serine 103. Substrate-binding positions include 157–158 and tyrosine 170; that span reads SL. Position 174 (lysine 174) interacts with NADP(+). Glycine 199 provides a ligand contact to substrate. 201 to 206 contacts NADP(+); sequence LDTDMQ. Serine 213 carries the phosphoserine; by CaMK2; in vitro modification. Aspartate 257 contributes to the substrate binding site.

This sequence belongs to the sepiapterin reductase family. As to quaternary structure, homodimer. In vitro phosphorylation of Ser-213 by CaMK2 does not change kinetic parameters.

The protein localises to the cytoplasm. It carries out the reaction L-erythro-7,8-dihydrobiopterin + NADP(+) = L-sepiapterin + NADPH + H(+). The enzyme catalyses (6R)-L-erythro-5,6,7,8-tetrahydrobiopterin + 2 NADP(+) = 6-pyruvoyl-5,6,7,8-tetrahydropterin + 2 NADPH + 2 H(+). In terms of biological role, catalyzes the final one or two reductions in tetra-hydrobiopterin biosynthesis to form 5,6,7,8-tetrahydrobiopterin. The polypeptide is Sepiapterin reductase (SPR) (Homo sapiens (Human)).